Consider the following 65-residue polypeptide: Large ribosomal subunit protein bL35 (65 aa).

Residues 1 to 28 (MPKMKTNRSAAKRFGKTGSGKFTRRRQN) form a disordered region.

This sequence belongs to the bacterial ribosomal protein bL35 family.

This chain is Large ribosomal subunit protein bL35, found in Solidesulfovibrio magneticus (strain ATCC 700980 / DSM 13731 / RS-1) (Desulfovibrio magneticus).